The chain runs to 530 residues: MEEDSLYLGGEWQFNHFSKLTSSRPDAAFAEIQRTSLPEKSPLSCETRVDLCDDLAPVARQLAPREKLPLSNRRPAAVGAGLQNMGNTCYVNASLQCLTYTPPLANYMLSREHSQTCHRHKGCMLCTMQAHITRALHNPGHVIQPSQALAAGFHRGKQEDAHEFLMFTVDAMKKACLPGHKQVDHHSKDTTLIHQIFGGYWRSQIKCLHCHGISDTFDPYLDIALDIQAAQSVQQALEQLVKPEELNGENAYHCGVCLQRAPASKMLTLLTSAKVLILVLKRFSDVTGNKIAKNVQYPECLDMQPYMSQPNTGPLVYVLYAVLVHAGWSCHNGHYFSYVKAQEGQWYKMDDAEVTASSITSVLSQQAYVLFYIQKSEWERHSESVSRGREPRALGAEDTDRRATQGELKRDHPCLQAPELDEHLVERATQESTLDHWKFLQEQNKTKPEFNVRKVEGTLPPDVLVIHQSKYKCGMKNHHPEQQSSLLKLSSTTPTHQESMNTGTLASLRGRARRSKGKNKHSKRALLVCQ.

Residues 80 to 375 enclose the USP domain; that stretch reads AGLQNMGNTC…QAYVLFYIQK (296 aa). The Nucleophile role is filled by Cys89. The Proton acceptor role is filled by His334. Basic and acidic residues-rich tracts occupy residues 382-392 and 398-412; these read SESVSRGREPR and DTDRRATQGELKRDH. Disordered stretches follow at residues 382 to 412 and 477 to 530; these read SESVSRGREPRALGAEDTDRRATQGELKRDH and NHHP…LVCQ. A compositionally biased stretch (low complexity) spans 484-495; it reads SSLLKLSSTTPT. Residues 496–505 show a composition bias toward polar residues; that stretch reads HQESMNTGTL. Residues 510–524 are compositionally biased toward basic residues; sequence GRARRSKGKNKHSKR.

The protein belongs to the peptidase C19 family. USP17 subfamily.

The protein resides in the nucleus. Its subcellular location is the endoplasmic reticulum. It catalyses the reaction Thiol-dependent hydrolysis of ester, thioester, amide, peptide and isopeptide bonds formed by the C-terminal Gly of ubiquitin (a 76-residue protein attached to proteins as an intracellular targeting signal).. In terms of biological role, deubiquitinating enzyme that removes conjugated ubiquitin from specific proteins to regulate different cellular processes that may include cell proliferation, progression through the cell cycle, apoptosis, cell migration, and the cellular response to viral infection. The chain is Ubiquitin carboxyl-terminal hydrolase 17-like protein 12 (USP17L12) from Homo sapiens (Human).